The sequence spans 137 residues: ATP synthase epsilon chain 1 (137 aa).

The protein belongs to the ATPase epsilon chain family. F-type ATPases have 2 components, CF(1) - the catalytic core - and CF(0) - the membrane proton channel. CF(1) has five subunits: alpha(3), beta(3), gamma(1), delta(1), epsilon(1). CF(0) has three main subunits: a, b and c.

It is found in the cell inner membrane. Functionally, produces ATP from ADP in the presence of a proton gradient across the membrane. The polypeptide is ATP synthase epsilon chain 1 (atpC1) (Ralstonia nicotianae (strain ATCC BAA-1114 / GMI1000) (Ralstonia solanacearum)).